We begin with the raw amino-acid sequence, 324 residues long: IDS-like terpene synthase 2 (324 aa).

Mg(2+) is bound by residues Asp77 and Asp81.

This sequence belongs to the FPP/GGPP synthase family. Mg(2+) is required as a cofactor.

The catalysed reaction is (2E)-geranyl diphosphate = (E)-beta-ocimene + diphosphate. The enzyme catalyses (2E,6E)-farnesyl diphosphate = (3E,6E)-alpha-farnesene + diphosphate. It carries out the reaction (2E,6E,10E)-geranylgeranyl diphosphate = (E,E,E)-alpha-springene + diphosphate. Functionally, terpene synthase that shows monoterpene synthase activity and produces (E)-beta-ocimene as a major product, using geranyl diphosphate (GPP) as substrate. Also shows sesquiterpene synthase activity as it is able to convert farnesyl diphosphate (FPP) into (E,E)-alpha-farnesene. Finally, TPS2 can convert geranylgeranyl diphosphate into (E,E,E)-alpha-springene. The protein is IDS-like terpene synthase 2 of Melampsora lini (Rust fungus).